Reading from the N-terminus, the 123-residue chain is Maintenance of telomere capping protein 3, mitochondrial (123 aa).

The N-terminal 37 residues, 1–37 (MMGRNGIRLALKRSFSTYQPPVVEITNITKLWPTLRP), are a transit peptide targeting the mitochondrion.

It localises to the mitochondrion. In terms of biological role, may be involved in telomere capping. This is Maintenance of telomere capping protein 3, mitochondrial (MTC3) from Saccharomyces cerevisiae (strain ATCC 204508 / S288c) (Baker's yeast).